We begin with the raw amino-acid sequence, 163 residues long: Interleukin-17F (163 aa).

Positions 1–30 are cleaved as a signal peptide; sequence MTVKTLHGPAMVKYLLLSILGLAFLSEAAA. Asparagine 83 carries N-linked (GlcNAc...) asparagine glycosylation. Intrachain disulfides connect cysteine 102–cysteine 152 and cysteine 107–cysteine 154.

Belongs to the IL-17 family. Homodimer; disulfide-linked. Heterodimer with IL17A (IL17A-IL17F). Forms complexes with IL17RA and IL17RC receptors with 2:1 binding stoichiometry: two receptor chains for one interleukin molecule. IL17F homodimer forms predominantly complexes with IL17RC homodimer, whereas IL17A-IL17F favors complexes with IL17RA-IL17RC. IL17RA and IL17RC chains cannot distinguish between IL17A and IL17F molecules, potentially enabling the formation of topologically distinct complexes. Expressed in T-helper 1 and T-helper 2 cells, basophils and mast cells.

The protein resides in the secreted. In terms of biological role, effector cytokine of innate and adaptive immune system involved in antimicrobial host defense and maintenance of tissue integrity. IL17A-IL17F signals via IL17RA-IL17RC heterodimeric receptor complex, triggering homotypic interaction of IL17RA and IL17RC chains with TRAF3IP2 adapter through SEFIR domains. This leads to downstream TRAF6-mediated activation of NF-kappa-B and MAPkinase pathways ultimately resulting in transcriptional activation of cytokines, chemokines, antimicrobial peptides and matrix metalloproteinases, with potential strong immune inflammation. IL17A-IL17F is primarily involved in host defense against extracellular bacteria and fungi by inducing neutrophilic inflammation. As signature effector cytokine of T-helper 17 cells (Th17), primarily induces neutrophil activation and recruitment at infection and inflammatory sites. Stimulates the production of antimicrobial beta-defensins DEFB1, DEFB103A, and DEFB104A by mucosal epithelial cells, limiting the entry of microbes through the epithelial barriers. IL17F homodimer can signal via IL17RC homodimeric receptor complex, triggering downstream activation of TRAF6 and NF-kappa-B signaling pathway. Via IL17RC induces transcriptional activation of IL33, a potent cytokine that stimulates group 2 innate lymphoid cells and adaptive T-helper 2 cells involved in pulmonary allergic response to fungi. Likely via IL17RC, promotes sympathetic innervation of peripheral organs by coordinating the communication between gamma-delta T cells and parenchymal cells. Stimulates sympathetic innervation of thermogenic adipose tissue by driving TGFB1 expression. Regulates the composition of intestinal microbiota and immune tolerance by inducing antimicrobial proteins that specifically control the growth of commensal Firmicutes and Bacteroidetes. This Homo sapiens (Human) protein is Interleukin-17F (IL17F).